The sequence spans 457 residues: MTLHCQKIGHGLPPILRSATADLLTKYGPLLFDWAARHGSPLNLVWPDALRENLAALKGVLTERRLEHAIYYGAKANKSPGLMQAALSAGAGLDVSSLYELRDARRLGADGARLVATGPAKTSAFHQELINCNALISVDSPEELEDLIHGLPADAGQQSILLRLRPRDQSKSRFGMPPDAVVHCLARLAGEGRVRFDGLHFHLSGYRRETRVAALREAADLIAEARRMGFFPGMIDIGGGLPIQYVDRARYKAHLAAQAPEDYRTGKIPDSFYPYGSTLSAADWLHRLLEAEMNQGRSVAGYLAREGLTLAMEPGRALADQAAITVFRISRVKALGPDSHVIFVEGSSFSACETWFASEFLIDPILVPATKATVQLPPVRAYLAGHSCLDEDVISNRWLTFPTAPRAGDLLVYANTGGYQMDLLENEFHRHPMPARFCVIEDAEGRPNLVPDTIGEV.

Lys75 bears the N6-(pyridoxal phosphate)lysine mark.

It depends on pyridoxal 5'-phosphate as a cofactor.

This is an uncharacterized protein from Sinorhizobium fredii (strain NBRC 101917 / NGR234).